Here is a 310-residue protein sequence, read N- to C-terminus: Oxygen-dependent coproporphyrinogen-III oxidase (310 aa).

Ser93 contributes to the substrate binding site. A divalent metal cation contacts are provided by His97 and His107. Catalysis depends on His107, which acts as the Proton donor. Residue 109 to 111 (NVR) participates in substrate binding. Residues His146 and His176 each coordinate a divalent metal cation. Residues 241–276 (YVEFNLVYDRGTLFGLQSGGRTESILMSLPPQVRWS) are important for dimerization. Position 259 to 261 (259 to 261 (GGR)) interacts with substrate.

This sequence belongs to the aerobic coproporphyrinogen-III oxidase family. As to quaternary structure, homodimer. Requires a divalent metal cation as cofactor.

It is found in the cytoplasm. The enzyme catalyses coproporphyrinogen III + O2 + 2 H(+) = protoporphyrinogen IX + 2 CO2 + 2 H2O. The protein operates within porphyrin-containing compound metabolism; protoporphyrin-IX biosynthesis; protoporphyrinogen-IX from coproporphyrinogen-III (O2 route): step 1/1. In terms of biological role, involved in the heme biosynthesis. Catalyzes the aerobic oxidative decarboxylation of propionate groups of rings A and B of coproporphyrinogen-III to yield the vinyl groups in protoporphyrinogen-IX. This is Oxygen-dependent coproporphyrinogen-III oxidase from Pseudomonas fluorescens (strain SBW25).